A 181-amino-acid chain; its full sequence is Ferritin BfrB (181 aa).

The region spanning 5-150 (GALDTKFHAL…TLVRIADRAG (146 aa)) is the Ferritin-like diiron domain. Lysine 10 participates in a covalent cross-link: Isoglutamyl lysine isopeptide (Lys-Gln) (interchain with Q-Cter in protein Pup). Residues glutamate 22, glutamate 55, histidine 58, glutamate 99, and glutamine 132 each coordinate Fe cation.

It belongs to the ferritin family. Prokaryotic subfamily. Homooligomer of 24 subunits that are packed together to form an approximately spherical molecule with a central cavity, in which large amounts of iron can be stored.

It catalyses the reaction 4 Fe(2+) + O2 + 4 H(+) = 4 Fe(3+) + 2 H2O. Functionally, iron-storage protein that displays ferroxidase activity, catalyzing the oxidation of Fe(2+) ions into Fe(3+) ions, that can then be deposited as a ferric-oxide mineral core within the central cavity of the protein complex. In Mycolicibacterium smegmatis (strain ATCC 700084 / mc(2)155) (Mycobacterium smegmatis), this protein is Ferritin BfrB (bfrB).